Consider the following 330-residue polypeptide: Mucin-15 (330 aa).

Residues 1 to 23 (MLTSAKILLISILSSLLLFGSHG) form the signal peptide. Positions 23–115 (GEEGQKTNTT…SPRSPSTHSF (93 aa)) are disordered. Topologically, residues 24–232 (EEGQKTNTTE…SDPQEENRNT (209 aa)) are extracellular. 15 N-linked (GlcNAc...) asparagine glycosylation sites follow: asparagine 30, asparagine 44, asparagine 54, asparagine 71, asparagine 79, asparagine 89, asparagine 94, asparagine 122, asparagine 138, asparagine 147, asparagine 154, asparagine 162, asparagine 175, asparagine 214, and asparagine 221. Residues 42-56 (MENQSVPLESKANLT) are compositionally biased toward polar residues. The span at 86 to 115 (FYSNLSTDNSSRSPSLMPTLSPRSPSTHSF) shows a compositional bias: polar residues. Residues 164 to 185 (SITVSNLPSGPNTTSVTPMVTE) form a disordered region. A helical transmembrane segment spans residues 233-253 (GVVFGAILGAILGASLLSLVG). Residues 254-330 (YLLCGKRKTD…DDIPPLRTSV (77 aa)) lie on the Cytoplasmic side of the membrane. Residues 279–330 (LRLDNAPEPYDMSFGNSSYYNPTANDSSTSAGGENAHDSIPMDDIPPLRTSV) form a disordered region. A compositionally biased stretch (polar residues) spans 292 to 310 (FGNSSYYNPTANDSSTSAG).

In terms of processing, highly glycosylated (N- and O-linked carbohydrates). As to expression, mainly expressed on apical surfaces of the mammary epithelial cells.

The protein resides in the cell membrane. The protein localises to the secreted. This is Mucin-15 (MUC15) from Bos taurus (Bovine).